The following is a 493-amino-acid chain: Trigger factor (493 aa).

The region spanning 169–254 is the PPIase FKBP-type domain; sequence GDRVTMDYLG…VKEVAAPAET (86 aa). Residues 439–493 are disordered; it reads ELLAEDEDGDDTKPAKKSAKKKAAKAEDASAEGEEAAPKKKAAAKKKAADEGDAE.

Belongs to the FKBP-type PPIase family. Tig subfamily.

The protein resides in the cytoplasm. It carries out the reaction [protein]-peptidylproline (omega=180) = [protein]-peptidylproline (omega=0). Its function is as follows. Involved in protein export. Acts as a chaperone by maintaining the newly synthesized protein in an open conformation. Functions as a peptidyl-prolyl cis-trans isomerase. This chain is Trigger factor, found in Allorhizobium ampelinum (strain ATCC BAA-846 / DSM 112012 / S4) (Agrobacterium vitis (strain S4)).